Reading from the N-terminus, the 95-residue chain is Endoribonuclease VapD homolog (95 aa).

It belongs to the VapD ribonuclease family. Homodimer.

In terms of biological role, cleaves ssRNA, mostly between U:A. The sequence is that of Endoribonuclease VapD homolog from Helicobacter pylori (strain ATCC 700392 / 26695) (Campylobacter pylori).